Reading from the N-terminus, the 1350-residue chain is Ubiquitin carboxyl-terminal hydrolase 47 (1350 aa).

The tract at residues 111-138 (DGEQPQLTSDESGTADSSGLDDSSQEKF) is disordered. Residues 115-132 (PQLTSDESGTADSSGLDD) are compositionally biased toward polar residues. Residues 173–548 (VGLVNQAMTC…NAYMLMYRLK (376 aa)) enclose the USP domain. Catalysis depends on C182, which acts as the Nucleophile. The tract at residues 409–437 (EDEKSPQTDSCTDSGAENEGSCHSDQMSN) is disordered. The span at 415-437 (QTDSCTDSGAENEGSCHSDQMSN) shows a compositional bias: polar residues. The active-site Proton acceptor is H487. Disordered regions lie at residues 815–836 (HPRPTARSVGPKGGGDMNPQED) and 859–1000 (SLQQ…ESGK). Residues 859–877 (SLQQHQDGGNGDSSKSTEG) are compositionally biased toward polar residues. The span at 916–926 (PEERSDSDVNN) shows a compositional bias: basic and acidic residues. A compositionally biased stretch (low complexity) spans 929 to 945 (STSSVDSDILSSSHSSD). Basic and acidic residues predominate over residues 973–982 (KANDGKKETW). A compositionally biased stretch (acidic residues) spans 983–996 (DTAEEDSGTDSEYD).

This sequence belongs to the peptidase C19 family. USP47 subfamily.

The protein localises to the cytoplasm. The enzyme catalyses Thiol-dependent hydrolysis of ester, thioester, amide, peptide and isopeptide bonds formed by the C-terminal Gly of ubiquitin (a 76-residue protein attached to proteins as an intracellular targeting signal).. In terms of biological role, ubiquitin-specific protease that specifically deubiquitinates monoubiquitinated DNA polymerase beta (polb), stabilizing polb thereby playing a role in base-excision repair (BER). The chain is Ubiquitin carboxyl-terminal hydrolase 47 (usp47) from Xenopus laevis (African clawed frog).